Reading from the N-terminus, the 409-residue chain is Probable glutaryl-CoA dehydrogenase, mitochondrial (409 aa).

110–111 contacts substrate; the sequence is RS. FAD is bound by residues 149-152, Ser-158, and 184-186; these read FGLT and WIS. Substrate is bound at residue Ser-158. Substrate is bound by residues 261–265 and Arg-268; that span reads FGCLN. Catalysis depends on Glu-388, which acts as the Proton acceptor. FAD-binding residues include Thr-390 and Phe-408.

The protein belongs to the acyl-CoA dehydrogenase family. It depends on FAD as a cofactor.

It localises to the mitochondrion matrix. It catalyses the reaction glutaryl-CoA + oxidized [electron-transfer flavoprotein] + 2 H(+) = (2E)-butenoyl-CoA + reduced [electron-transfer flavoprotein] + CO2. It functions in the pathway amino-acid metabolism; lysine degradation. Its pathway is amino-acid metabolism; tryptophan metabolism. The protein is Probable glutaryl-CoA dehydrogenase, mitochondrial of Caenorhabditis elegans.